Here is a 423-residue protein sequence, read N- to C-terminus: Probable WRKY transcription factor 58 (423 aa).

Disordered stretches follow at residues 91 to 128 (SSAHTGFIQPRQQSQPQPQRPDTFPHHMPPSTSVAVHG), 142 to 171 (RNHYNNPGNNNNNRSYNVVNVDKPADDGYN), and 215 to 284 (IYKG…GVST). Low complexity-rich tracts occupy residues 99–111 (QPRQQSQPQPQRP) and 144–162 (HYNNPGNNNNNRSYNVVNV). A DNA-binding region (WRKY 1) is located at residues 161–225 (NVDKPADDGY…YKGQHDHERP (65 aa)). Residues 259-271 (DDDDDDDEDDEDL) are compositionally biased toward acidic residues. The WRKY 2 DNA-binding region spans 300–365 (SEVDLLDDGY…YEGKHNHDVP (66 aa)).

Its subcellular location is the nucleus. In terms of biological role, transcription factor. Interacts specifically with the W box (5'-(T)TGAC[CT]-3'), a frequently occurring elicitor-responsive cis-acting element. The protein is Probable WRKY transcription factor 58 (WRKY58) of Arabidopsis thaliana (Mouse-ear cress).